The following is a 514-amino-acid chain: Bifunctional purine biosynthesis protein PurH (514 aa).

The MGS-like domain maps to 1–146; it reads MARLALLSVS…KNFAHLAVLC (146 aa).

The protein belongs to the PurH family.

The enzyme catalyses (6R)-10-formyltetrahydrofolate + 5-amino-1-(5-phospho-beta-D-ribosyl)imidazole-4-carboxamide = 5-formamido-1-(5-phospho-D-ribosyl)imidazole-4-carboxamide + (6S)-5,6,7,8-tetrahydrofolate. The catalysed reaction is IMP + H2O = 5-formamido-1-(5-phospho-D-ribosyl)imidazole-4-carboxamide. It functions in the pathway purine metabolism; IMP biosynthesis via de novo pathway; 5-formamido-1-(5-phospho-D-ribosyl)imidazole-4-carboxamide from 5-amino-1-(5-phospho-D-ribosyl)imidazole-4-carboxamide (10-formyl THF route): step 1/1. It participates in purine metabolism; IMP biosynthesis via de novo pathway; IMP from 5-formamido-1-(5-phospho-D-ribosyl)imidazole-4-carboxamide: step 1/1. The chain is Bifunctional purine biosynthesis protein PurH from Nostoc punctiforme (strain ATCC 29133 / PCC 73102).